The primary structure comprises 238 residues: Pyridoxine 5'-phosphate synthase (238 aa).

Asn-6 is a binding site for 3-amino-2-oxopropyl phosphate. Position 8-9 (8-9 (DH)) interacts with 1-deoxy-D-xylulose 5-phosphate. Residue Arg-17 coordinates 3-amino-2-oxopropyl phosphate. His-42 functions as the Proton acceptor in the catalytic mechanism. Residues Arg-44 and His-49 each coordinate 1-deoxy-D-xylulose 5-phosphate. Glu-69 serves as the catalytic Proton acceptor. Thr-99 serves as a coordination point for 1-deoxy-D-xylulose 5-phosphate. His-190 acts as the Proton donor in catalysis. 3-amino-2-oxopropyl phosphate-binding positions include Gly-191 and 212–213 (GH).

It belongs to the PNP synthase family. In terms of assembly, homooctamer; tetramer of dimers.

The protein localises to the cytoplasm. It carries out the reaction 3-amino-2-oxopropyl phosphate + 1-deoxy-D-xylulose 5-phosphate = pyridoxine 5'-phosphate + phosphate + 2 H2O + H(+). Its pathway is cofactor biosynthesis; pyridoxine 5'-phosphate biosynthesis; pyridoxine 5'-phosphate from D-erythrose 4-phosphate: step 5/5. Catalyzes the complicated ring closure reaction between the two acyclic compounds 1-deoxy-D-xylulose-5-phosphate (DXP) and 3-amino-2-oxopropyl phosphate (1-amino-acetone-3-phosphate or AAP) to form pyridoxine 5'-phosphate (PNP) and inorganic phosphate. The polypeptide is Pyridoxine 5'-phosphate synthase (Chlorobium phaeobacteroides (strain BS1)).